We begin with the raw amino-acid sequence, 222 residues long: Dual specificity phosphatase 29 (222 aa).

Positions 54–202 (HVNEVWPKLY…LRELDKQLVQ (149 aa)) constitute a Tyrosine-protein phosphatase domain. Position 146–153 (146–153 (HCAMGRSR)) interacts with substrate. Cys147 (phosphocysteine intermediate) is an active-site residue. The segment at 201–222 (VQQRRGAQHRGEAGEKAGEKEP) is disordered. Over residues 209–222 (HRGEAGEKAGEKEP) the composition is skewed to basic and acidic residues.

The protein belongs to the protein-tyrosine phosphatase family. Non-receptor class dual specificity subfamily. Homodimer. Interacts with PRKAA2.

The protein localises to the cytoplasm. The protein resides in the nucleus. It catalyses the reaction O-phospho-L-tyrosyl-[protein] + H2O = L-tyrosyl-[protein] + phosphate. The enzyme catalyses O-phospho-L-seryl-[protein] + H2O = L-seryl-[protein] + phosphate. The catalysed reaction is O-phospho-L-threonyl-[protein] + H2O = L-threonyl-[protein] + phosphate. In terms of biological role, dual specificity phosphatase able to dephosphorylate phosphotyrosine, phosphoserine and phosphothreonine residues within the same substrate, with a preference for phosphotyrosine as a substrate. Involved in the modulation of intracellular signaling cascades. In skeletal muscle regulates systemic glucose homeostasis by activating, AMPK, an energy sensor protein kinase. Affects MAP kinase signaling though modulation of the MAPK1/2 cascade in skeletal muscle promoting muscle cell differentiation, development and atrophy. This Sus scrofa (Pig) protein is Dual specificity phosphatase 29 (DUSP29).